The primary structure comprises 346 residues: Pyrophosphate--fructose 6-phosphate 1-phosphotransferase (346 aa).

G13 serves as a coordination point for diphosphate. A Mg(2+)-binding site is contributed by E105. Residues 127–129 (TID), R164, 171–173 (MGR), E224, R269, and 275–278 (HLQR) contribute to the substrate site. D129 acts as the Proton acceptor in catalysis.

It belongs to the phosphofructokinase type A (PFKA) family. Mixed-substrate PFK group III subfamily. Homodimer. Mg(2+) is required as a cofactor.

The protein resides in the cytoplasm. The enzyme catalyses beta-D-fructose 6-phosphate + diphosphate = beta-D-fructose 1,6-bisphosphate + phosphate + H(+). It functions in the pathway carbohydrate degradation; glycolysis; D-glyceraldehyde 3-phosphate and glycerone phosphate from D-glucose: step 3/4. Its activity is regulated as follows. Non-allosteric. Functionally, catalyzes the phosphorylation of D-fructose 6-phosphate, the first committing step of glycolysis. Uses inorganic phosphate (PPi) as phosphoryl donor instead of ATP like common ATP-dependent phosphofructokinases (ATP-PFKs), which renders the reaction reversible, and can thus function both in glycolysis and gluconeogenesis. Consistently, PPi-PFK can replace the enzymes of both the forward (ATP-PFK) and reverse (fructose-bisphosphatase (FBPase)) reactions. This is Pyrophosphate--fructose 6-phosphate 1-phosphotransferase from Dictyoglomus thermophilum.